The following is a 420-amino-acid chain: Glycerol-3-phosphate dehydrogenase [NAD(+)] 2, chloroplastic (420 aa).

The N-terminal 45 residues, 1 to 45 (MAASVQPACLDLHFSGKHPPLLKHNAIIVRCVSSPNVIPEADSIS), are a transit peptide targeting the chloroplast. Residues 94–99 (GGGSFG), phenylalanine 171, lysine 194, and alanine 228 contribute to the NAD(+) site. A substrate-binding site is contributed by lysine 194. Lysine 279 (proton acceptor) is an active-site residue. NAD(+) is bound by residues arginine 343 and glutamate 369. 343–344 (RN) provides a ligand contact to substrate.

It belongs to the NAD-dependent glycerol-3-phosphate dehydrogenase family.

It is found in the plastid. The protein resides in the chloroplast. It catalyses the reaction sn-glycerol 3-phosphate + NAD(+) = dihydroxyacetone phosphate + NADH + H(+). It functions in the pathway membrane lipid metabolism; glycerophospholipid metabolism. In terms of biological role, required to supply glycerol-3-phosphate in the chloroplast for the synthesis of glycerolipids. Required for activation of systemic acquired resistance (SAR). Provision of glycerol-3-phosphate may be involved in generating lipid signals necessary for mediating defense responses and SAR. The sequence is that of Glycerol-3-phosphate dehydrogenase [NAD(+)] 2, chloroplastic (GLY1) from Arabidopsis thaliana (Mouse-ear cress).